Here is a 457-residue protein sequence, read N- to C-terminus: ATP synthase subunit beta (457 aa).

Position 147–154 (147–154) interacts with ATP; it reads GGAGVGKT.

The protein belongs to the ATPase alpha/beta chains family. In terms of assembly, F-type ATPases have 2 components, CF(1) - the catalytic core - and CF(0) - the membrane proton channel. CF(1) has five subunits: alpha(3), beta(3), gamma(1), delta(1), epsilon(1). CF(0) has three main subunits: a(1), b(2) and c(9-12). The alpha and beta chains form an alternating ring which encloses part of the gamma chain. CF(1) is attached to CF(0) by a central stalk formed by the gamma and epsilon chains, while a peripheral stalk is formed by the delta and b chains.

It localises to the cell inner membrane. It catalyses the reaction ATP + H2O + 4 H(+)(in) = ADP + phosphate + 5 H(+)(out). Its function is as follows. Produces ATP from ADP in the presence of a proton gradient across the membrane. The catalytic sites are hosted primarily by the beta subunits. The protein is ATP synthase subunit beta of Haemophilus influenzae (strain PittGG).